We begin with the raw amino-acid sequence, 311 residues long: Solute carrier family 25 member 36-A (311 aa).

Solcar repeat units follow at residues 4-108 (RDTL…SKEK), 116-203 (DSTQ…IKRK), and 224-308 (SDFV…VVYL). 6 helical membrane-spanning segments follow: residues 7 to 27 (LVHL…TCPL), 41 to 57 (FYIS…ASVA), 111 to 131 (NVFD…AGFT), 180 to 200 (MSAS…YESI), 226 to 246 (FVGM…IAYP), and 291 to 311 (QIPN…LLNG).

The protein belongs to the mitochondrial carrier (TC 2.A.29) family.

It localises to the mitochondrion inner membrane. This Danio rerio (Zebrafish) protein is Solute carrier family 25 member 36-A (slc25a36a).